We begin with the raw amino-acid sequence, 399 residues long: Probable aspartate/prephenate aminotransferase (399 aa).

The L-aspartate site is built by Gly39, Trp125, and Asn175. Lys239 bears the N6-(pyridoxal phosphate)lysine mark. Arg375 serves as a coordination point for L-aspartate.

The protein belongs to the class-I pyridoxal-phosphate-dependent aminotransferase family. Homodimer. It depends on pyridoxal 5'-phosphate as a cofactor.

It localises to the cytoplasm. The enzyme catalyses L-aspartate + 2-oxoglutarate = oxaloacetate + L-glutamate. It carries out the reaction L-arogenate + 2-oxoglutarate = prephenate + L-glutamate. In terms of biological role, catalyzes the reversible conversion of aspartate and 2-oxoglutarate to glutamate and oxaloacetate. Can also transaminate prephenate in the presence of glutamate. This is Probable aspartate/prephenate aminotransferase (aatA) from Rickettsia prowazekii (strain Madrid E).